Here is a 601-residue protein sequence, read N- to C-terminus: Phosphomethylpyrimidine synthase (601 aa).

Substrate is bound by residues N224, M253, Y282, H318, 338 to 340, 379 to 382, and E418; these read SRG and DGLR. H422 is a binding site for Zn(2+). Y445 is a binding site for substrate. Residue H486 participates in Zn(2+) binding. The [4Fe-4S] cluster site is built by C566, C569, and C574.

Belongs to the ThiC family. As to quaternary structure, homodimer. The cofactor is [4Fe-4S] cluster.

The catalysed reaction is 5-amino-1-(5-phospho-beta-D-ribosyl)imidazole + S-adenosyl-L-methionine = 4-amino-2-methyl-5-(phosphooxymethyl)pyrimidine + CO + 5'-deoxyadenosine + formate + L-methionine + 3 H(+). It participates in cofactor biosynthesis; thiamine diphosphate biosynthesis. Catalyzes the synthesis of the hydroxymethylpyrimidine phosphate (HMP-P) moiety of thiamine from aminoimidazole ribotide (AIR) in a radical S-adenosyl-L-methionine (SAM)-dependent reaction. This Xylella fastidiosa (strain 9a5c) protein is Phosphomethylpyrimidine synthase.